The chain runs to 149 residues: UPF0756 membrane protein MS1439 (149 aa).

The next 4 helical transmembrane spans lie at 10 to 32 (IMLV…ISAL), 56 to 76 (VGII…KVQL), 82 to 102 (FLNW…WFAG), and 126 to 146 (VAFL…LAVI).

This sequence belongs to the UPF0756 family.

The protein localises to the cell membrane. This is UPF0756 membrane protein MS1439 from Mannheimia succiniciproducens (strain KCTC 0769BP / MBEL55E).